The following is a 255-amino-acid chain: U2 small nuclear ribonucleoprotein A' (255 aa).

LRR repeat units follow at residues 20–41 (RDRE…GATL), 43–64 (QFDA…PLLR), 65–86 (RLKT…LDQA), and 89–110 (CLTE…DPLA). In terms of domain architecture, LRRCT spans 123–161 (NPVTNKKHYRLYVIYKVPQVRVLDFQKVKLKERQEAEKM). The residue at position 172 (Lys172) is an N6-acetyllysine; alternate. Lys172 is covalently cross-linked (Glycyl lysine isopeptide (Lys-Gly) (interchain with G-Cter in SUMO2); alternate). The segment at 174–201 (IARRSKTFNPGAGLPTDKKKGGPSPGDV) is disordered. 2 positions are modified to phosphoserine: Ser178 and Ser197. Residue Lys221 forms a Glycyl lysine isopeptide (Lys-Gly) (interchain with G-Cter in SUMO2) linkage. The disordered stretch occupies residues 222 to 255 (GLLQSGQIPGRERRSGPTDDGEEEMEEDTVTNGS). Residues Ser236 and Ser255 each carry the phosphoserine modification. Over residues 240-255 (DDGEEEMEEDTVTNGS) the composition is skewed to acidic residues.

Belongs to the U2 small nuclear ribonucleoprotein A family. In terms of assembly, identified in the spliceosome B complex. Identified in the spliceosome C complex. Found in a pre-mRNA splicing complex with SFRS4, SFRS5, SNRNP70, SNRPA1, SRRM1 and SRRM2. Found in a pre-mRNA exonic splicing enhancer (ESE) complex with SNRNP70, SNRPA1, SRRM1 and TRA2B. Contributes to the binding of stem loop IV of U2 snRNA with SNRPB2.

It localises to the nucleus. Involved in pre-mRNA splicing as component of the spliceosome. Associated with sn-RNP U2, where it contributes to the binding of stem loop IV of U2 snRNA. This chain is U2 small nuclear ribonucleoprotein A' (SNRPA1), found in Homo sapiens (Human).